The chain runs to 267 residues: 4-hydroxy-tetrahydrodipicolinate reductase (267 aa).

8–13 (GANGRM) serves as a coordination point for NAD(+). Position 35 (arginine 35) interacts with NADP(+). Residues 98–100 (GTT) and 122–125 (AANY) each bind NAD(+). Residue histidine 155 is the Proton donor/acceptor of the active site. Residue histidine 156 coordinates (S)-2,3,4,5-tetrahydrodipicolinate. The Proton donor role is filled by lysine 159. A (S)-2,3,4,5-tetrahydrodipicolinate-binding site is contributed by 165-166 (GT).

The protein belongs to the DapB family.

It is found in the cytoplasm. The enzyme catalyses (S)-2,3,4,5-tetrahydrodipicolinate + NAD(+) + H2O = (2S,4S)-4-hydroxy-2,3,4,5-tetrahydrodipicolinate + NADH + H(+). It carries out the reaction (S)-2,3,4,5-tetrahydrodipicolinate + NADP(+) + H2O = (2S,4S)-4-hydroxy-2,3,4,5-tetrahydrodipicolinate + NADPH + H(+). Its pathway is amino-acid biosynthesis; L-lysine biosynthesis via DAP pathway; (S)-tetrahydrodipicolinate from L-aspartate: step 4/4. In terms of biological role, catalyzes the conversion of 4-hydroxy-tetrahydrodipicolinate (HTPA) to tetrahydrodipicolinate. The sequence is that of 4-hydroxy-tetrahydrodipicolinate reductase from Pseudoalteromonas atlantica (strain T6c / ATCC BAA-1087).